A 79-amino-acid chain; its full sequence is Mipartoxin-3 (79 aa).

An N-terminal signal peptide occupies residues 1–21 (MKTLLLTLVVVTIVCLDLGNS). Disulfide bonds link Cys-24/Cys-41, Cys-34/Cys-59, Cys-63/Cys-71, and Cys-72/Cys-77.

The protein belongs to the three-finger toxin family. Short-chain subfamily. As to expression, expressed by the venom gland.

It is found in the secreted. Snake venom neurotoxin that blocks neuromuscular transmission, presenting a postsynaptic action through the nicotinic acetylcholine receptor (nAChR). Has no cytotoxic activity. The chain is Mipartoxin-3 from Micrurus mipartitus (Red-tailed coral snake).